A 537-amino-acid chain; its full sequence is MGGAGILLFLLAWAGAGVAWSPPKGKCPPHCSCSKENTLCEGSPELPESFSTTLLSLSLVRMGVSRLKAGSFLKMPSLHLLLFTSNTFSVIEGDAFIGLSYLQYLFIEDNKIGSISKNALRGLRSLTHLSLANNHLEALPRFLFRGLETLTHVDLRGNPFQCDCRVLWLLQWMPTVNASVGTGACAGPPAVAQIQLNHLDPKKFKCRATELSWLQTVGESALSVESFSYQGEPHMVLAQPFAGRCLILVWDYSLQRFRPEEELSAPSVVSCKPLVLGPRLFILAARLWGGSQLWSRSSPDLRLTPVQVLAPQRLLRPNDAELLWLDGQPCFVVADASKAGSTTLLCRDGPGFYPRQSLHAWHRDTDAEALELDGRPHLLLASASQRPVLFHWVGGRFERRTDIPEAEDVYATKHFQAGGDVFLCLTRYIGDSMVMRWDGSMFRLLQQLPSRGSHVFQPLLIARDQLAILGSDFAFSQVFRFESDKGILEPLQELGPPALVAPRAFAQVTVAGRRFLFAACFKGPTQIYQHHELDLSA.

Positions 1–19 are cleaved as a signal peptide; sequence MGGAGILLFLLAWAGAGVA. LRR repeat units follow at residues 53-74, 77-98, 101-122, and 125-146; these read TLLSLSLVRMGVSRLKAGSFLK, SLHLLLFTSNTFSVIEGDAFIG, YLQYLFIEDNKIGSISKNALRG, and SLTHLSLANNHLEALPRFLFRG. The LRRCT domain maps to 158–208; that stretch reads NPFQCDCRVLWLLQWMPTVNASVGTGACAGPPAVAQIQLNHLDPKKFKCRA. N-linked (GlcNAc...) asparagine glycosylation occurs at N177. EAR repeat units lie at residues 210 to 252, 256 to 298, 302 to 349, 351 to 394, 396 to 439, 441 to 483, and 487 to 532; these read ELSW…VWDY, RFRP…SRSS, RLTP…CRDG, GFYP…HWVG, RFER…RWDG, MFRL…RFES, and ILEP…QHHE.

As to quaternary structure, can bind to ADAM11, ADAM22 and ADAM23. In terms of tissue distribution, brain. Expressed in the entire developing peripheral nerves. Strongly expressed in the trigeminal nerve and ganglion and particularly abundant in the boundary cap cells - a transient population of cells that contributes to the Schwann cell population of the dorsal root nerve.

It localises to the secreted. Its function is as follows. Component of Schwann cell signaling pathway(s) that controls axon segregation and myelin formation. The protein is Leucine-rich repeat LGI family member 4 (Lgi4) of Mus musculus (Mouse).